A 65-amino-acid chain; its full sequence is Crotamine (65 aa).

An N-terminal signal peptide occupies residues 1–22; that stretch reads MKILYLLFAFLFLAFLSEPGNA. 2 consecutive short sequence motifs (nuclear localization signal) follow at residues 24-40 and 49-61; these read KQCHKKGGHCFPKEKIC and KMDCRWRWKCCKK. Intrachain disulfides connect cysteine 26–cysteine 58, cysteine 33–cysteine 52, and cysteine 40–cysteine 59.

The protein belongs to the crotamine-myotoxin family. As to quaternary structure, monomer. As to expression, expressed by the venom gland.

The protein resides in the secreted. Functionally, cationic peptide that possesses multiple functions. It acts as a cell-penetrating peptide (CPP), and as a potent voltage-gated potassium channel inhibitor. It exhibits antimicrobial activities, hind limb paralysis, and severe muscle necrosis by a non-enzymatic mechanism. As a cell-penetrating peptide, crotamine has high specificity for actively proliferating cells, and interacts inside the cell with subcellular and subnuclear structures, like vesicular compartments, chromosomes and centrioles. It penetrates into the cells as fast as five minutes after its addition to cell culture medium. In vivo, after intraperitoneal administration, it is found in cells of peritoneal fluid and bone marrow, demonstrating preferential nuclear and perinuclear localization. To enter the cell, it interacts with the chains of heparan sulfate membrane proteoglycan (HSPG), and is endocytosed (in complex with HSPG) in vesicles which are transported into the cell with the help of clathrin. Inside the cell, crotamine accumulates in lysosomal vesicles. As soon as the peptide accumulates in endosomes/lysosomes vesicles, these compartments are disrupted and their contents released into the cytosol. This loss of lysosomal content induces cell death at high concentrations, or promotes the distribution of crotamine in cytoplasmic compartments, which is a step before crotamine nuclear uptake. As a potassium channel inhibitor, this toxin selectively inhibits Kv1.1/KCNA1, Kv1.2/KCNA2 and Kv1.3/KCNA3 channels with an IC(50) of 369, 386 and 287 nM, respectively. The inhibition of Kv1.3/KCNA channels induced by this toxin occurs rapidly and is voltage-independent. The channel inhibition is reversible after washing, suggesting a pure and classical channel blockage effect, without effects in potassium channel kinetics. As an antimicrobial peptide, crotamine shows antibacterial activity against E.coli and B.subtilis, and antifungal activity against Candida spp., Trichosporon spp. and C.neoformans. It kills bacteria through membrane permeabilization. The protein is Crotamine (CRO2) of Crotalus durissus terrificus (South American rattlesnake).